The sequence spans 196 residues: MAAEHLLPGPPPSLADFRLEAGGKGTERGSGSSKPTGSSRGPRMAKFLSQDQINEYKECFSLYDKQQRGKIKATDLMVAMRCLGASPTPGEVQRHLQTHGIDGNGELDFSTFLTIMHMQIKQEDPKKEILLAMLMVDKEKKGYVMASDLRSKLTSLGEKLTHKEVDDLFREADIEPNGKVKYDEFIHKITLPGRDY.

The tract at residues Met-1–Arg-43 is disordered. Over residues Phe-17 to Glu-27 the composition is skewed to basic and acidic residues. The span at Gly-29 to Ser-39 shows a compositional bias: polar residues. EF-hand domains lie at Asp-51–Ser-86, Pro-87–Gln-122, Asp-124–Lys-159, and Leu-160–Asp-195.

It belongs to the calmodulin family. As to quaternary structure, interacts with MYO7B; the interaction mediates the association of CALML4 with the IMAC/intermicrovillar adhesion complex. Interacts with MYO7A. As to expression, expressed in the intestinal tract. In terms of tissue distribution, dominant transcript in the intestinal tract.

It is found in the cell projection. The protein localises to the microvillus. In terms of biological role, as part of the intermicrovillar adhesion complex/IMAC plays a role in epithelial brush border differentiation, controlling microvilli organization and length. Acts as a light chain for MYO7B and is required for efficient targeting of the IMAC to the tips of border brush microvilli. This is Calmodulin-like protein 4 from Homo sapiens (Human).